The sequence spans 82 residues: Exodeoxyribonuclease 7 small subunit (82 aa).

The protein belongs to the XseB family. In terms of assembly, heterooligomer composed of large and small subunits.

The protein localises to the cytoplasm. The catalysed reaction is Exonucleolytic cleavage in either 5'- to 3'- or 3'- to 5'-direction to yield nucleoside 5'-phosphates.. Its function is as follows. Bidirectionally degrades single-stranded DNA into large acid-insoluble oligonucleotides, which are then degraded further into small acid-soluble oligonucleotides. In Pectobacterium carotovorum subsp. carotovorum (strain PC1), this protein is Exodeoxyribonuclease 7 small subunit.